We begin with the raw amino-acid sequence, 184 residues long: Gremlin-1 (184 aa).

The signal sequence occupies residues 1–24; the sequence is MNRTAYTVGALLLLLGTLLPAAEG. Residues asparagine 2 and asparagine 42 are each glycosylated (N-linked (GlcNAc...) asparagine). The segment at 24-78 is disordered; sequence GKKKGSQGAIPPPDKAQHNDSEQTQSPPQPGSRTRGRGQGRGTAMPGEEVLESSQ. Disulfide bonds link cysteine 94–cysteine 144, cysteine 108–cysteine 158, cysteine 118–cysteine 176, and cysteine 122–cysteine 178. A CTCK domain is found at 94-184; it reads CKTQPLKQTI…QCRCISIDLD (91 aa).

This sequence belongs to the DAN family. Homodimer; can also form homooligomers. Interacts with BMP2; can form higher oligomers with BMP2. Interacts with SLIT1 and SLIT2 in a glycosylation-dependent manner. Highly expressed in the brain, kidney, spleen, and testis and weakly expressed in the lung and liver. Predominantly expressed in differentiated cells as neurons in brain, type I cells in lung and globlet cells in intestine.

It is found in the secreted. Cytokine that may play an important role during carcinogenesis and metanephric kidney organogenesis, as a BMP antagonist required for early limb outgrowth and patterning in maintaining the FGF4-SHH feedback loop. Down-regulates the BMP4 signaling in a dose-dependent manner. Antagonist of BMP2; inhibits BMP2-mediated differentiation of osteoblasts (in vitro). Acts as inhibitor of monocyte chemotaxis. Can inhibit the growth or viability of normal cells but not transformed cells when is overexpressed. This is Gremlin-1 (Grem1) from Rattus norvegicus (Rat).